The primary structure comprises 84 residues: MPIIKSAIERAKTNVKANERNSAQLSTMRTAVKRFEQAKTAGADNAEELYRKASAAVDKAASKGLIKRNKASRDKSRMAARLAK.

This sequence belongs to the bacterial ribosomal protein bS20 family.

Binds directly to 16S ribosomal RNA. This Levilactobacillus brevis (strain ATCC 367 / BCRC 12310 / CIP 105137 / JCM 1170 / LMG 11437 / NCIMB 947 / NCTC 947) (Lactobacillus brevis) protein is Small ribosomal subunit protein bS20.